Here is a 1537-residue protein sequence, read N- to C-terminus: Leucine-rich repeat-containing protein 7 (1537 aa).

LRR repeat units lie at residues 23 to 44 (IISV…VFNF), 47 to 68 (TLEE…LFNC), 70 to 91 (ALRK…IASL), 93 to 114 (NLKE…IKCC), 116 to 137 (CLTI…FTQL), 139 to 161 (NLTQ…GRLV), 162 to 183 (KLRI…MHKL), 185 to 206 (QLER…LDQI), 208 to 229 (NLRE…IGKL), 231 to 253 (MLVY…SGCE), 254 to 275 (ALED…IGLL), 277 to 298 (KLTT…IGNL), 300 to 321 (LLEE…IGYL), 323 to 344 (SLRT…IGSC), 346 to 367 (NVTV…IGQM), 369 to 391 (KLRV…TKLK), and 392 to 413 (ELAA…QTEA). Phosphoserine occurs at positions 439, 441, and 443. Residues 663–676 (KKESTDESEVDKTH) show a composition bias toward basic and acidic residues. Disordered stretches follow at residues 663–709 (KKES…VGSL), 730–759 (FPQP…DRLP), 786–810 (AENA…RRPL), and 824–892 (EQST…SPGV). Residues 677 to 709 (CLNNSVSSGTYSDYSPSQASSGSSNTRVKVGSL) show a composition bias toward polar residues. Residues 790–804 (NSNPLLSSKSRSTSS) are compositionally biased toward low complexity. Thr831 is modified (phosphothreonine). Phosphoserine is present on Ser850. Over residues 859–871 (PSKLETTPTTSPL) the composition is skewed to low complexity. At Thr865 the chain carries Phosphothreonine. The residue at position 869 (Ser869) is a Phosphoserine. Over residues 872–882 (PERKEHIKEST) the composition is skewed to basic and acidic residues. A phosphoserine mark is found at Ser947, Ser949, and Ser1118. The tract at residues 1136–1159 (ELPPTDRYGRPPYRGGLDRQSSVT) is disordered. Arg1149 carries the omega-N-methylarginine modification. At Ser1233 the chain carries Phosphoserine. 2 disordered regions span residues 1234-1265 (DYNL…SCGK) and 1331-1360 (QKTP…YPLG). Residues 1243-1263 (KPSDNSDLKTRPTPVKGEESC) show a composition bias toward basic and acidic residues. The span at 1332-1354 (KTPSQQSNILDNGQEDVSPSGQW) shows a compositional bias: polar residues. A phosphoserine mark is found at Ser1335 and Ser1439. The 91-residue stretch at 1445–1535 (EQFCVRIEKN…TVDLVIQREL (91 aa)) folds into the PDZ domain.

It belongs to the LAP (LRR and PDZ) protein family. Interacts with CNKSR2 and DLG4. Interacts with CTNND2/Catenin delta-2. Forms a complex with N-cadherin through CTNND2. Interacts with CAMK2A. As to expression, brain-specific. Isoform 3 is ubiquitously expressed.

It is found in the cytoplasm. The protein resides in the postsynaptic density. Its function is as follows. Required for normal synaptic spine architecture and function. Necessary for DISC1 and GRM5 localization to postsynaptic density complexes and for both N-methyl D-aspartate receptor-dependent and metabotropic glutamate receptor-dependent long term depression. In Homo sapiens (Human), this protein is Leucine-rich repeat-containing protein 7 (LRRC7).